Reading from the N-terminus, the 376-residue chain is Endo-1,4-beta-xylanase A (376 aa).

Positions 1–18 are cleaved as a signal peptide; the sequence is MHLASSLFLLATLPFGFA. The 301-residue stretch at 55-355 folds into the GH10 domain; that stretch reads QRERAGLEDK…HPAYYGVVEA (301 aa). Residue N100 is glycosylated (N-linked (GlcNAc...) asparagine). Catalysis depends on E170, which acts as the Proton donor. The active-site Nucleophile is E277. The N-linked (GlcNAc...) asparagine glycan is linked to N358.

It belongs to the glycosyl hydrolase 10 (cellulase F) family.

It localises to the secreted. It carries out the reaction Endohydrolysis of (1-&gt;4)-beta-D-xylosidic linkages in xylans.. It functions in the pathway glycan degradation; xylan degradation. Partial inhibition of activity is detected in the presence of Ag(+), Cu2(+) and SDS. Like most fungal xylanases, activity is completely inhibited by Hg(2+) since Hg(2+) could interact with tryptophan residues and oxidize the indole ring. Beta-mercaptoethanol enhances the enzymatic activity by counteracting the oxidation effects of the S-S linkage between cysteine residues. Its function is as follows. Endo-1,4-beta-xylanase involved in the hydrolysis of xylan, a major structural heterogeneous polysaccharide found in plant biomass representing the second most abundant polysaccharide in the biosphere, after cellulose. Is most active on birchwood xylan (defined as 100%), moderate on beechwood xylan (96.8%) and soluble wheat arabinoxylan (84.5%), and weak on insoluble wheat arabinoxylan (19.7%). Hydrolyzes substrates into a mixture of xylobiose and xylotriose, but no xylose. No activity was detected in the presence of barley beta-glucan, carboxymethyl cellulose-sodium (CMC-Na), and Avicel. Acts as an alkali-tolerant xylanase, exhibiting 68.8% of the activity at pH 9.0, and even 31.8% at pH 10.0. In Humicola insolens (Soft-rot fungus), this protein is Endo-1,4-beta-xylanase A.